The primary structure comprises 329 residues: Chlorophyllase-1, chloroplastic (329 aa).

A chloroplast-targeting transit peptide spans 1-21 (MAAMVDAKPAASVQGTPLLAT). The GXSXG signature appears at 145–149 (GHSRG). Serine 147 functions as the Nucleophile in the catalytic mechanism. Residues aspartate 169 and histidine 242 each act as charge relay system in the active site.

The protein belongs to the AB hydrolase superfamily. Lipase family.

Its subcellular location is the plastid. The protein resides in the chloroplast. The catalysed reaction is a chlorophyll + H2O = a chlorophyllide + phytol + H(+). The protein operates within porphyrin-containing compound metabolism; chlorophyll degradation. Functionally, catalyzes the hydrolysis of ester bond in chlorophyll to yield chlorophyllide and phytol. This Citrus sinensis (Sweet orange) protein is Chlorophyllase-1, chloroplastic (CHLASE1).